Reading from the N-terminus, the 34-residue chain is Phalloidin proprotein (34 aa).

Residues 1–10 (MSDINASRLP) constitute a propeptide that is removed on maturation. The cyclopeptide (Ala-Pro) cross-link spans 11 to 17 (AWLATCP). A cross-link (2'-cysteinyl-6'-hydroxytryptophan sulfoxide (Trp-Cys)) is located at residues 12–16 (WLATC). The propeptide occupies 18–34 (CVGDDVNPTLSRGESLC).

The protein belongs to the MSDIN fungal toxin family. Processed by the macrocyclase-peptidase enzyme POPB to yield a toxic cyclic heptapeptide. POPB first removes 10 residues from the N-terminus. Conformational trapping of the remaining peptide forces the enzyme to release this intermediate rather than proceed to macrocyclization. The enzyme rebinds the remaining peptide in a different conformation and catalyzes macrocyclization of the N-terminal 7 residues.

Its function is as follows. Toxin that belongs to the bicyclic heptapeptides called phallotoxins. Although structurally related to amatoxins, phallotoxins have a different mode of action, which is the stabilization of F-actin. Phallotoxins are poisonous when administered parenterally, but not orally because of poor absorption. This is Phalloidin proprotein from Amanita phalloides (Death cap).